Here is a 114-residue protein sequence, read N- to C-terminus: Large ribosomal subunit protein uL18 (114 aa).

This sequence belongs to the universal ribosomal protein uL18 family. In terms of assembly, part of the 50S ribosomal subunit; part of the 5S rRNA/L5/L18/L25 subcomplex. Contacts the 5S and 23S rRNAs.

Its function is as follows. This is one of the proteins that bind and probably mediate the attachment of the 5S RNA into the large ribosomal subunit, where it forms part of the central protuberance. This is Large ribosomal subunit protein uL18 from Bacteroides thetaiotaomicron (strain ATCC 29148 / DSM 2079 / JCM 5827 / CCUG 10774 / NCTC 10582 / VPI-5482 / E50).